The chain runs to 294 residues: tRNA dimethylallyltransferase (294 aa).

11-18 (GPTAVGKT) contributes to the ATP binding site. 13 to 18 (TAVGKT) is a substrate binding site. An interaction with substrate tRNA region spans residues 36–39 (DSQQ).

It belongs to the IPP transferase family. Monomer. Mg(2+) serves as cofactor.

The enzyme catalyses adenosine(37) in tRNA + dimethylallyl diphosphate = N(6)-dimethylallyladenosine(37) in tRNA + diphosphate. Catalyzes the transfer of a dimethylallyl group onto the adenine at position 37 in tRNAs that read codons beginning with uridine, leading to the formation of N6-(dimethylallyl)adenosine (i(6)A). The chain is tRNA dimethylallyltransferase from Lactococcus lactis subsp. lactis (strain IL1403) (Streptococcus lactis).